We begin with the raw amino-acid sequence, 486 residues long: Malonate-semialdehyde dehydrogenase 1 (486 aa).

Positions 154, 178, 181, 182, and 231 each coordinate NAD(+). Cys-286 serves as the catalytic Nucleophile. Glu-386 is an NAD(+) binding site.

Belongs to the aldehyde dehydrogenase family. IolA subfamily. Homotetramer.

It catalyses the reaction 3-oxopropanoate + NAD(+) + CoA + H2O = hydrogencarbonate + acetyl-CoA + NADH + H(+). The catalysed reaction is 2-methyl-3-oxopropanoate + NAD(+) + CoA + H2O = propanoyl-CoA + hydrogencarbonate + NADH + H(+). Its pathway is polyol metabolism; myo-inositol degradation into acetyl-CoA; acetyl-CoA from myo-inositol: step 7/7. Its function is as follows. Catalyzes the oxidation of malonate semialdehyde (MSA) and methylmalonate semialdehyde (MMSA) into acetyl-CoA and propanoyl-CoA, respectively. Is involved in a myo-inositol catabolic pathway. Bicarbonate, and not CO2, is the end-product of the enzymatic reaction. This is Malonate-semialdehyde dehydrogenase 1 from Bacillus anthracis.